A 499-amino-acid polypeptide reads, in one-letter code: MNSSLVILYHREPYDEVRENGKTVYREKKSPNGILPTLKSFFADAEQSTWVAWKQVSPKQKDDFQADMSIEGLGDRCTVRRVPLTAEQVKNFYHITSKEAFWPILHSFPWQFTYDSSDWDNFQHINRLFAEAACADADDNALFWVHDYNLWLAPLYIRQLKPNAKIAFFHHTPFPSVDIFNILPWREAIVESLLACDLCGFHIPRYVENFVAVARSLKPVEITRRVVVDQAFTPYGTALAEPELTTQLRYGDRLINLDAFPVGTNPANIRAIVAKESVQQKVAEIKQDLGGKRLIVSAGRVDYVKGTKEMLMCYERLLERRPELQGEISLVVPVAKAAEGMRIYRNAQNEIERLAGKINGRFAKLSWTPVMLFTSPLAYEELIALFCAADIAWITPLRDGLNLVAKEYVVAKNGEEGVLILSEFAGCAVELPDAVLTNPYASSRMDESIDQALAMDKDEQKKRMGRMYAAIKRYDVQQWANHLLREAYADVVLGEPPQM.

The protein belongs to the glycosyltransferase 20 family. Interacts with GGP-P. Post-translationally, seems to be degraded, at least in vitro, by FtsH2. In an ftsH2 disruption strain inactive GGPS accumulates.

It localises to the cytoplasm. It carries out the reaction ADP-alpha-D-glucose + sn-glycerol 3-phosphate = 2-O-(alpha-D-glucopyranosyl)-sn-glycerol 3-phosphate + ADP + H(+). It functions in the pathway glycan metabolism; glucosylglycerol biosynthesis. Its function is as follows. Involved in salt tolerance by producing GG-phosphate from ADP-glucose and glycerol-3-phosphate (G3P), an intermediate in the synthesis of the osmolyte glucosylglycerol (GG). This chain is Glucosylglycerol-phosphate synthase (ggpS), found in Synechocystis sp. (strain ATCC 27184 / PCC 6803 / Kazusa).